Here is a 644-residue protein sequence, read N- to C-terminus: Exoribonuclease 2 (644 aa).

The region spanning R189–K516 is the RNB domain. Residues D561–V643 enclose the S1 motif domain.

The protein belongs to the RNR ribonuclease family. RNase II subfamily.

The protein resides in the cytoplasm. It catalyses the reaction Exonucleolytic cleavage in the 3'- to 5'-direction to yield nucleoside 5'-phosphates.. In terms of biological role, involved in mRNA degradation. Hydrolyzes single-stranded polyribonucleotides processively in the 3' to 5' direction. This is Exoribonuclease 2 from Shigella boydii serotype 18 (strain CDC 3083-94 / BS512).